A 214-amino-acid chain; its full sequence is Uridine kinase (214 aa).

15-22 (GASASGKS) contributes to the ATP binding site.

This sequence belongs to the uridine kinase family.

It localises to the cytoplasm. The catalysed reaction is uridine + ATP = UMP + ADP + H(+). It carries out the reaction cytidine + ATP = CMP + ADP + H(+). Its pathway is pyrimidine metabolism; CTP biosynthesis via salvage pathway; CTP from cytidine: step 1/3. It functions in the pathway pyrimidine metabolism; UMP biosynthesis via salvage pathway; UMP from uridine: step 1/1. This Aeromonas salmonicida (strain A449) protein is Uridine kinase.